A 140-amino-acid polypeptide reads, in one-letter code: Gonadotropin subunit beta-2 (140 aa).

Residues 1–24 form the signal peptide; sequence MSVYPECTWLLFVCLCHLLVSAGG. Intrachain disulfides connect cysteine 30–cysteine 78, cysteine 44–cysteine 93, cysteine 47–cysteine 131, cysteine 55–cysteine 109, cysteine 59–cysteine 111, and cysteine 114–cysteine 121. An N-linked (GlcNAc...) asparagine glycan is attached at asparagine 34.

The protein belongs to the glycoprotein hormones subunit beta family. In terms of assembly, heterodimer of an alpha and a beta chain.

It is found in the secreted. Involved in gametogenesis and steroidogenesis. The protein is Gonadotropin subunit beta-2 (cgbb) of Anguilla anguilla (European freshwater eel).